The following is a 319-amino-acid chain: Multivesicular body subunit 12B (319 aa).

Positions Met1–Ile50 are disordered. Residues Pro13 to Gln24 are compositionally biased toward pro residues. A phosphoserine mark is found at Ser46 and Ser101. One can recognise an MABP domain in the interval Met47–Arg193. Residues Thr122, Thr204, and Thr205 each carry the phosphothreonine modification. The disordered stretch occupies residues Pro195 to His222. Over residues Ser200–Ala216 the composition is skewed to low complexity. Ser224 carries the post-translational modification Phosphoserine. Positions Met254 to Ala303 constitute a UMA domain. Positions Glu299 to Ser319 are disordered. A Phosphoserine modification is found at Ser309.

This sequence belongs to the MVB12 family. In terms of assembly, component of the ESCRT-I complex (endosomal sorting complex required for transport I) which consists of TSG101, VPS28, a VPS37 protein (VPS37A to -D) and MVB12A or MVB12B in a 1:1:1:1 stoichiometry. Interacts with TSG101; the association appears to be mediated by the TSG101-VPS37 binary subcomplex. Interacts with VPS28. Interacts with VPS37B; the association appears to be mediated by the TSG101-VPS37 binary subcomplex. Interacts with VPS37C; the association appears to be mediated by the TSG101-VPS37 binary subcomplex.

Its subcellular location is the endosome. It localises to the late endosome membrane. Its function is as follows. Component of the ESCRT-I complex, a regulator of vesicular trafficking process. Required for the sorting of endocytic ubiquitinated cargos into multivesicular bodies. The sequence is that of Multivesicular body subunit 12B (MVB12B) from Homo sapiens (Human).